We begin with the raw amino-acid sequence, 527 residues long: Phosphoenolpyruvate carboxykinase (ATP) (527 aa).

Substrate-binding residues include Arg56, Tyr192, and Lys198. ATP is bound by residues Lys198, His217, and 233–241 (GLSGTGKTT). Mn(2+)-binding residues include Lys198 and His217. Mn(2+) is bound at residue Asp254. Residues Glu282, Arg319, and Thr444 each coordinate ATP. Arg319 is a binding site for substrate.

The protein belongs to the phosphoenolpyruvate carboxykinase (ATP) family. Mn(2+) is required as a cofactor.

The protein resides in the cytoplasm. It catalyses the reaction oxaloacetate + ATP = phosphoenolpyruvate + ADP + CO2. Its pathway is carbohydrate biosynthesis; gluconeogenesis. Involved in the gluconeogenesis. Catalyzes the conversion of oxaloacetate (OAA) to phosphoenolpyruvate (PEP) through direct phosphoryl transfer between the nucleoside triphosphate and OAA. The polypeptide is Phosphoenolpyruvate carboxykinase (ATP) (Bacillus velezensis (strain DSM 23117 / BGSC 10A6 / LMG 26770 / FZB42) (Bacillus amyloliquefaciens subsp. plantarum)).